Here is a 180-residue protein sequence, read N- to C-terminus: Translation initiation factor IF-3 (180 aa).

This sequence belongs to the IF-3 family. In terms of assembly, monomer.

The protein resides in the cytoplasm. IF-3 binds to the 30S ribosomal subunit and shifts the equilibrium between 70S ribosomes and their 50S and 30S subunits in favor of the free subunits, thus enhancing the availability of 30S subunits on which protein synthesis initiation begins. This chain is Translation initiation factor IF-3, found in Salmonella typhi.